Consider the following 198-residue polypeptide: Recombination protein RecR (198 aa).

The C4-type zinc-finger motif lies at 57–72 (CSVCGNLTDDDPCLIC). Residues 80 to 175 (SVILVVEDSK…KVTRLARGLA (96 aa)) enclose the Toprim domain.

This sequence belongs to the RecR family.

Functionally, may play a role in DNA repair. It seems to be involved in an RecBC-independent recombinational process of DNA repair. It may act with RecF and RecO. In Streptococcus agalactiae serotype Ia (strain ATCC 27591 / A909 / CDC SS700), this protein is Recombination protein RecR.